Reading from the N-terminus, the 658-residue chain is UvrABC system protein C (658 aa).

The 79-residue stretch at 62–140 folds into the GIY-YIG domain; that stretch reads PKPGVYRMLD…IKRFRPPYNV (79 aa). The 36-residue stretch at 250 to 285 folds into the UVR domain; sequence GAVQREIEAQMHKAAEDLDFERAAMLRDRLRAATFI.

This sequence belongs to the UvrC family. As to quaternary structure, interacts with UvrB in an incision complex.

The protein resides in the cytoplasm. The UvrABC repair system catalyzes the recognition and processing of DNA lesions. UvrC both incises the 5' and 3' sides of the lesion. The N-terminal half is responsible for the 3' incision and the C-terminal half is responsible for the 5' incision. The protein is UvrABC system protein C of Novosphingobium aromaticivorans (strain ATCC 700278 / DSM 12444 / CCUG 56034 / CIP 105152 / NBRC 16084 / F199).